A 602-amino-acid chain; its full sequence is Cytokine-like nuclear factor N-PAC (602 aa).

Phosphoserine is present on residues Ser-8 and Ser-10. One can recognise a PWWP domain in the interval 22–81 (PKDLIWAKMKGFTPWPGMIVDPPLDLLSQQRRANTKCVFFFGSRNFAWIEENNIKPFEGP). Residues 162 to 262 (GSPDEGDGLD…ASSTPTGRRR (101 aa)) are disordered. 3 stretches are compositionally biased toward polar residues: residues 176–188 (ADSS…SPAV), 204–217 (AATS…SAKS), and 224–233 (SAQQSPSGPS). Ser-224, Ser-228, and Ser-243 each carry phosphoserine. Positions 309 to 602 (RDIVPSEQTF…SSAVFVRSRF (294 aa)) are dehydrogenase domain. Residues 319–333 (GFLG…IVKD), Thr-411, and Arg-554 contribute to the NAD(+) site.

Belongs to the HIBADH-related family. NP60 subfamily. As to quaternary structure, binds to mononucleosomes. Interacts with male-specific lethal (MSL) histone acetyltransferase complex at least composed of mof, msl-1, msl-2 and msl-3.

The protein resides in the chromosome. Nucleosome-destabilizing factor that is recruited to genes during transcriptional activation and colocalizes with a subset of trimethylated 'Lys-36' histone H3 (H3K36me3)-enriched regions. Binds DNA (in vitro). Facilitates Pol II transcription through nucleosomes. Facilitates male-specific lethal (MSL) histone acetyltransferase complex targeting to active genes on the X chromosome. Stimulates the acetylation of 'Lys-56' of nucleosomal histone H3 (H3K56ac) by nej. May have oxidoreductase activity. The polypeptide is Cytokine-like nuclear factor N-PAC (Drosophila melanogaster (Fruit fly)).